We begin with the raw amino-acid sequence, 652 residues long: DNA ligase (652 aa).

NAD(+) is bound by residues 29–33, 78–79, and E107; these read DSDYD and SL. K109 functions as the N6-AMP-lysine intermediate in the catalytic mechanism. Positions 130, 164, 278, and 302 each coordinate NAD(+). Zn(2+) contacts are provided by C395, C398, C413, and C418. The 76-residue stretch at 577–652 folds into the BRCT domain; the sequence is NSDAALFGLT…IEDEDWLRQL (76 aa).

Belongs to the NAD-dependent DNA ligase family. LigA subfamily. Mg(2+) serves as cofactor. Requires Mn(2+) as cofactor.

It catalyses the reaction NAD(+) + (deoxyribonucleotide)n-3'-hydroxyl + 5'-phospho-(deoxyribonucleotide)m = (deoxyribonucleotide)n+m + AMP + beta-nicotinamide D-nucleotide.. Functionally, DNA ligase that catalyzes the formation of phosphodiester linkages between 5'-phosphoryl and 3'-hydroxyl groups in double-stranded DNA using NAD as a coenzyme and as the energy source for the reaction. It is essential for DNA replication and repair of damaged DNA. The sequence is that of DNA ligase from Streptococcus pyogenes serotype M49 (strain NZ131).